The chain runs to 243 residues: MIIIPARLKSSRFENKVLEDIFGLPMVVRCAKNANLVDECVVACDDESIMQTCQKFHIKAVLTSKHHNSGTERCLEAVQILGLKNDERVLNLQGDEPFLEKEVILALLEATKNAPFMATCAKVIDEEQAKSPNLVKVVLDSQNNALYFSRSLIPFLRDFDAKRQTPLLGHIGIYGFHNKEILEELCALKPCVLEEIEKLEQLRALYYQKKILVKIVQSQSVGIDTQEDLQNALKIFSPDLLER.

It belongs to the KdsB family.

It is found in the cytoplasm. It carries out the reaction 3-deoxy-alpha-D-manno-oct-2-ulosonate + CTP = CMP-3-deoxy-beta-D-manno-octulosonate + diphosphate. The protein operates within nucleotide-sugar biosynthesis; CMP-3-deoxy-D-manno-octulosonate biosynthesis; CMP-3-deoxy-D-manno-octulosonate from 3-deoxy-D-manno-octulosonate and CTP: step 1/1. It participates in bacterial outer membrane biogenesis; lipopolysaccharide biosynthesis. Functionally, activates KDO (a required 8-carbon sugar) for incorporation into bacterial lipopolysaccharide in Gram-negative bacteria. This is 3-deoxy-manno-octulosonate cytidylyltransferase from Helicobacter pylori (strain G27).